Reading from the N-terminus, the 197-residue chain is ATP-dependent Clp protease proteolytic subunit (197 aa).

Ser-102 acts as the Nucleophile in catalysis. The active site involves His-127.

The protein belongs to the peptidase S14 family. Fourteen ClpP subunits assemble into 2 heptameric rings which stack back to back to give a disk-like structure with a central cavity, resembling the structure of eukaryotic proteasomes.

It localises to the cytoplasm. The catalysed reaction is Hydrolysis of proteins to small peptides in the presence of ATP and magnesium. alpha-casein is the usual test substrate. In the absence of ATP, only oligopeptides shorter than five residues are hydrolyzed (such as succinyl-Leu-Tyr-|-NHMec, and Leu-Tyr-Leu-|-Tyr-Trp, in which cleavage of the -Tyr-|-Leu- and -Tyr-|-Trp bonds also occurs).. In terms of biological role, cleaves peptides in various proteins in a process that requires ATP hydrolysis. Has a chymotrypsin-like activity. Plays a major role in the degradation of misfolded proteins. The sequence is that of ATP-dependent Clp protease proteolytic subunit from Borreliella afzelii (strain PKo) (Borrelia afzelii).